The chain runs to 2313 residues: Protein Ycf2 (2313 aa).

An ATP-binding site is contributed by Gly-1606–Ser-1613.

The protein belongs to the Ycf2 family.

The protein localises to the plastid. It localises to the chloroplast stroma. Probable ATPase of unknown function. Its presence in a non-photosynthetic plant (Epifagus virginiana) and experiments in tobacco indicate that it has an essential function which is probably not related to photosynthesis. The sequence is that of Protein Ycf2 from Psilotum nudum (Whisk fern).